A 417-amino-acid chain; its full sequence is Cotranscriptional regulator ARB2A (417 aa).

Residues 1-18 (MSISLSSLIFLPIWINMA) form the signal peptide. N-linked (GlcNAc...) asparagine glycosylation is present at asparagine 26. Positions 208-248 (KQKMHKQSSSSDGTDEPAGKRERRDKVSKETKKRRDFYEKY) are disordered. The segment covering 224 to 237 (PAGKRERRDKVSKE) has biased composition (basic and acidic residues). The active-site Nucleophile is serine 294. The segment at 398–417 (SSSQKPALTRRSHRIKHEEL) is disordered. The segment covering 405–417 (LTRRSHRIKHEEL) has biased composition (basic residues). A Prevents secretion from ER motif is present at residues 414-417 (HEEL).

Belongs to the ARB2A family. As to quaternary structure, interacts with AGO2. Found in a complex, composed of AGO2, CHD7 and ARB2A.

The protein localises to the nucleus. It localises to the cytoplasm. Its subcellular location is the endoplasmic reticulum. In terms of biological role, plays a role in the regulation of alternative splicing, by interacting with AGO2 and CHD7. Seems to be required for stabilizing protein-protein interactions at the chromatin-spliceosome interface. May have hydrolase activity. This chain is Cotranscriptional regulator ARB2A (Arb2a), found in Mus musculus (Mouse).